The primary structure comprises 343 residues: MTMRLPPLPTIGELIRLFGLSAKQQLSQNFLLDLNITDKIVRSSGDLTNKTVIEVGPGPGGLTRSILKAGAKKLVVIEKDRRFLPALEVLRHAAGNIDGSPWEEAFLTKSEMDAKRYMSYAPNKSRMQIVMNDVLRVDEQEILQHIHAPIDSNDKTQWENMAPITIIGNLPFAISTELTIKWLKQIQGRHGAFRFGRAEFILMFQKEVADRLIANPGTKQYSRLTVMTQQLCSVKKLSDIPGSAFVPKPDVDASLVSMVPRVTPLGVNVPTPTLEYVCRQVFGQRRKMINNSVKTLGPEAEILLARAHIDPTLRPEQLTVPQWCDLARAYQQWENKPQWAPAL.

S-adenosyl-L-methionine contacts are provided by residues 28-31, Asn-29, Leu-31, Gly-56, Glu-78, Asp-133, and Asn-169; that span reads QNFL.

Belongs to the class I-like SAM-binding methyltransferase superfamily. rRNA adenine N(6)-methyltransferase family. KsgA subfamily.

It localises to the mitochondrion. In terms of biological role, probable S-adenosyl-L-methionine-dependent methyltransferase which specifically dimethylates mitochondrial 12S rRNA at the conserved stem loop. Also required for basal transcription of mitochondrial DNA. Stimulates transcription independently of the methyltransferase activity. This is Dimethyladenosine transferase 1, mitochondrial from Vermamoeba vermiformis (Amoeba).